Reading from the N-terminus, the 211-residue chain is MKKILISMIAIVLSITLAACGSNHAAKNHSDSNGTEQVSQDTHSNEYNQTEQKAGTPHSKNQKKLVNVTLDRAIDGDTIKVIYNGKKDTVRYLLVDTPETKKPNSCVQPYGEDASKRNKELVNSGKLQLEFDKGDRRDKYGRLLAYVYVDGKSVQETLLKEGLARVAYVYEPNTKYIDQFRLDEQEAKSDKLSIWSKSGYVTNRGFNGCVK.

The first 19 residues, 1–19, serve as a signal peptide directing secretion; the sequence is MKKILISMIAIVLSITLAA. Cys20 carries N-palmitoyl cysteine lipidation. The S-diacylglycerol cysteine moiety is linked to residue Cys20. The segment at 24–63 is disordered; that stretch reads HAAKNHSDSNGTEQVSQDTHSNEYNQTEQKAGTPHSKNQK. A compositionally biased stretch (polar residues) spans 31-53; that stretch reads DSNGTEQVSQDTHSNEYNQTEQK. Positions 64 to 197 constitute a TNase-like domain; sequence KLVNVTLDRA…KSDKLSIWSK (134 aa). Asp77 provides a ligand contact to Ca(2+). The active site involves Arg91. Ca(2+) is bound by residues Asp96 and Thr97. Active-site residues include Glu99 and Arg142.

It belongs to the thermonuclease family. Ca(2+) serves as cofactor.

The protein resides in the cell membrane. With respect to regulation, inhibited by aurintricalboxylic acid but not by Zn(2+). Its function is as follows. Shows DNase activity on double strand DNA. The protein is Endonuclease YncB (yncB) of Bacillus subtilis (strain 168).